A 65-amino-acid chain; its full sequence is Large ribosomal subunit protein bL35 (65 aa).

The interval 1-22 is disordered; sequence MPKLKTKSGAAKRFKKTGKGGF.

The protein belongs to the bacterial ribosomal protein bL35 family.

This Francisella philomiragia subsp. philomiragia (strain ATCC 25017 / CCUG 19701 / FSC 153 / O#319-036) protein is Large ribosomal subunit protein bL35.